The primary structure comprises 1007 residues: Serine/threonine-protein kinase PRP4 homolog (1007 aa).

A compositionally biased stretch (polar residues) spans methionine 1–arginine 10. Residues methionine 1–lysine 99 are disordered. Alanine 2 carries the N-acetylalanine modification. 4 positions are modified to phosphoserine: serine 8, serine 20, serine 23, and serine 32. Composition is skewed to basic residues over residues lysine 39–histidine 59 and lysine 67–lysine 81. The span at glutamate 82–glycine 91 shows a compositional bias: basic and acidic residues. Residues serine 87 and serine 93 each carry the phosphoserine modification. Residue lysine 99 is modified to N6-acetyllysine; alternate. Lysine 99 participates in a covalent cross-link: Glycyl lysine isopeptide (Lys-Gly) (interchain with G-Cter in SUMO2); alternate. Lysine 111 is covalently cross-linked (Glycyl lysine isopeptide (Lys-Gly) (interchain with G-Cter in SUMO2)). Lysine 117 participates in a covalent cross-link: Glycyl lysine isopeptide (Lys-Gly) (interchain with G-Cter in SUMO2); alternate. Lysine 117 participates in a covalent cross-link: Glycyl lysine isopeptide (Lys-Gly) (interchain with G-Cter in SUMO1); alternate. Serine 131 bears the Phosphoserine mark. Tyrosine 140 bears the Phosphotyrosine mark. 2 disordered regions span residues tyrosine 140 to aspartate 533 and serine 559 to aspartate 583. 3 positions are modified to phosphoserine: serine 142, serine 144, and serine 166. Low complexity predominate over residues glycine 157–lysine 168. Residues lysine 170 and lysine 177 each participate in a glycyl lysine isopeptide (Lys-Gly) (interchain with G-Cter in SUMO2) cross-link. Basic residues-rich tracts occupy residues threonine 179–lysine 202 and arginine 214–serine 230. Phosphoserine occurs at positions 239, 241, 257, 277, 283, 292, and 294. Positions arginine 247–lysine 270 are enriched in basic and acidic residues. Residues serine 302 to lysine 315 show a composition bias toward basic residues. The segment covering arginine 316 to proline 325 has biased composition (basic and acidic residues). Residues serine 328, serine 354, serine 356, serine 366, and serine 368 each carry the phosphoserine modification. Over residues proline 342 to arginine 367 the composition is skewed to basic residues. The residue at position 385 (threonine 385) is a Phosphothreonine. Serine 387 is modified (phosphoserine). Composition is skewed to basic and acidic residues over residues arginine 395 to arginine 408 and arginine 415 to aspartate 429. Serine 427, serine 431, and serine 437 each carry phosphoserine. Basic residues predominate over residues proline 438–serine 497. Residues serine 518, serine 519, serine 520, serine 565, serine 569, serine 578, and serine 580 each carry the phosphoserine modification. The span at serine 518 to aspartate 533 shows a compositional bias: acidic residues. Over residues serine 562–proline 581 the composition is skewed to low complexity. Glycyl lysine isopeptide (Lys-Gly) (interchain with G-Cter in SUMO2) cross-links involve residues lysine 593 and lysine 659. The Protein kinase domain maps to tyrosine 687 to lysine 1006. Residues threonine 693–valine 701 and lysine 717 contribute to the ATP site. Residue lysine 717 is modified to N6-acetyllysine. Aspartate 815 functions as the Proton acceptor in the catalytic mechanism. At tyrosine 849 the chain carries Phosphotyrosine. Serine 852 bears the Phosphoserine mark.

It belongs to the protein kinase superfamily. CMGC Ser/Thr protein kinase family. As to quaternary structure, interacts with CLK1 C-terminus. Associates with the U5 snRNP and NCOR1 deacetylase complexes. Identified in the spliceosome C complex. In terms of processing, phosphorylated by CLK1. Autophosphorylated; phosphorylation inhibits interaction with its targets, such as PRPF6 or SMARCA4. Ubiquitous.

It localises to the nucleus. The protein resides in the chromosome. The protein localises to the centromere. Its subcellular location is the kinetochore. It carries out the reaction L-seryl-[protein] + ATP = O-phospho-L-seryl-[protein] + ADP + H(+). The catalysed reaction is L-threonyl-[protein] + ATP = O-phospho-L-threonyl-[protein] + ADP + H(+). In terms of biological role, serine/threonine kinase involved in spliceosomal assembly as well as mitosis and signaling regulation. Connects chromatin mediated regulation of transcription and pre-mRNA splicing. During spliceosomal assembly, interacts with and phosphorylates PRPF6 and PRPF31, components of the U4/U6-U5 tri-small nuclear ribonucleoprotein (snRNP), to facilitate the formation of the spliceosome B complex. Plays a role in regulating transcription and the spindle assembly checkpoint (SAC). Associates with U5 snRNP and NCOR1 deacetylase complexes which may allow a coordination of pre-mRNA splicing with chromatin remodeling events involved in transcriptional regulation. Associates and probably phosphorylates SMARCA4 and NCOR1. Phosphorylates SRSF1. Associates with kinetochores during mitosis and is necessary for recruitment and maintenance of the checkpoint proteins such as MAD1L1 and MAD12L1 at the kinetochores. Phosphorylates and regulates the activity of the transcription factors such as ELK1 and KLF13. Phosphorylates nuclear YAP1 and WWTR1/TAZ which induces nuclear exclusion and regulates Hippo signaling pathway, involved in tissue growth control. This Homo sapiens (Human) protein is Serine/threonine-protein kinase PRP4 homolog.